Here is a 268-residue protein sequence, read N- to C-terminus: Undecaprenyl-diphosphatase (268 aa).

7 helical membrane passes run leucine 41–phenylalanine 61, tryptophan 81–methionine 101, tyrosine 106–phenylalanine 126, methionine 146–isoleucine 166, phenylalanine 191–glycine 211, valine 213–isoleucine 233, and valine 245–leucine 265.

The protein belongs to the UppP family.

The protein resides in the cell membrane. The enzyme catalyses di-trans,octa-cis-undecaprenyl diphosphate + H2O = di-trans,octa-cis-undecaprenyl phosphate + phosphate + H(+). Functionally, catalyzes the dephosphorylation of undecaprenyl diphosphate (UPP). The sequence is that of Undecaprenyl-diphosphatase from Pyrobaculum islandicum (strain DSM 4184 / JCM 9189 / GEO3).